The sequence spans 290 residues: ATP synthase gamma chain (290 aa).

The protein belongs to the ATPase gamma chain family. As to quaternary structure, F-type ATPases have 2 components, CF(1) - the catalytic core - and CF(0) - the membrane proton channel. CF(1) has five subunits: alpha(3), beta(3), gamma(1), delta(1), epsilon(1). CF(0) has three main subunits: a, b and c.

The protein resides in the cell inner membrane. Produces ATP from ADP in the presence of a proton gradient across the membrane. The gamma chain is believed to be important in regulating ATPase activity and the flow of protons through the CF(0) complex. The polypeptide is ATP synthase gamma chain (Gemmatimonas aurantiaca (strain DSM 14586 / JCM 11422 / NBRC 100505 / T-27)).